The sequence spans 707 residues: Lipase maturation factor 2 (707 aa).

10 consecutive transmembrane segments (helical) span residues 10–30 (LFLQ…YTQI), 78–98 (LELL…LSPL), 102–122 (VIYL…QVFL), 123–143 (YFQW…VAPL), 165–185 (DLPF…SGVV), 227–247 (LSVV…FAPI), 259–279 (VLLQ…LMTL), 310–330 (ALLA…LAYG), 364–384 (LTLP…LSAL), and 399–419 (AVVQ…ISLV). Residues Asn489 and Asn616 are each glycosylated (N-linked (GlcNAc...) asparagine). The helical transmembrane segment at 637 to 657 (ALLWGLLMAVGAVRFVQALLA) threads the bilayer. Residues 665-707 (PLAPVSGEKRRPASQKDSGAASEQATAAPNPCSSSSRTTRRKK) form a disordered region. Positions 679–691 (QKDSGAASEQATA) are enriched in polar residues.

The protein belongs to the lipase maturation factor family.

It is found in the endoplasmic reticulum membrane. In terms of biological role, involved in the maturation of specific proteins in the endoplasmic reticulum. May be required for maturation and transport of active lipoprotein lipase (LPL) through the secretory pathway. This Homo sapiens (Human) protein is Lipase maturation factor 2 (LMF2).